The chain runs to 255 residues: Homeobox protein DLX-1 (255 aa).

Residues 1–14 show a composition bias toward polar residues; the sequence is MTMTTMPESLNSPV. Disordered stretches follow at residues 1–38 and 95–118; these read MTMT…MSHG and SLAQ…EGGE. Low complexity predominate over residues 25–36; it reads PPNQQMSPSPMS. Basic and acidic residues predominate over residues 100 to 112; that stretch reads RLEDPGADSEKST. The segment at residues 128–187 is a DNA-binding region (homeobox); that stretch reads IRKPRTIYSSLQLQALNRRFQQTQYLALPERAELAASLGLTQTQVKIWFQNKRSKFKKLM. The disordered stretch occupies residues 204–233; that stretch reads ALSAGSPPVPPGWNPNSSSGKGSGSSAGSY. Residues 217–232 show a composition bias toward low complexity; the sequence is NPNSSSGKGSGSSAGS.

Belongs to the distal-less homeobox family. Interacts with SMAD4 (via homeobox DNA-binding domain). Interacts (via homeobox DNA-binding domain) with POU4F2; this interaction suppresses DLX1-mediated transcriptional activity in postnatal retina and enhances retinal ganglion cell (RGC) differentiation. In terms of tissue distribution, expressed in a restricted region of the developing brain, within the diencephalon and the adjacent telencephalic regions.

The protein localises to the nucleus. In terms of biological role, plays a role as a transcriptional activator or repressor. Inhibits several cytokine signaling pathways, such as TGFB1, activin-A/INHBA and BMP4 by interfering with the transcriptional stimulatory activity of transcription factors, such as MSX2, FAST2, SMAD2 and SMAD3 during hematopoietic cell differentiation. Plays a role in terminal differentiation of interneurons, such as amacrine and bipolar cells in the developing retina. Likely to play a regulatory role in the development of the ventral forebrain. May play a role in craniofacial patterning and morphogenesis and may be involved in the early development of diencephalic subdivisions. This Mus musculus (Mouse) protein is Homeobox protein DLX-1 (Dlx1).